The primary structure comprises 1358 residues: Nonribosomal peptide synthetase rstn8 (1358 aa).

The segment at 1–23 (MSHSSHYSPVDSGMVPSSSSTED) is disordered. Residues 261 to 659 (YRELDRLSSR…LGEVEYRLHQ (399 aa)) are adenylation. The 78-residue stretch at 795–872 (ETVSPAESTL…DQASLVRPLV (78 aa)) folds into the Carrier domain. An O-(pantetheine 4'-phosphoryl)serine modification is found at Ser832. The interval 909 to 1322 (EDIYPCTPLQ…DDYSQALHEL (414 aa)) is condensation.

This sequence belongs to the NRP synthetase family. Requires pantetheine 4'-phosphate as cofactor.

It carries out the reaction restrictinol + glycine + H(+) = restricticin + H2O. Its pathway is antifungal biosynthesis. Its function is as follows. Nonribosomal peptide synthetase; part of the gene cluster that mediates the biosynthesis of the tetrahydropyranyl antifungal agent restricticin that acts as an inhibitor of CYP51 and blocks the ergosterol biosynthesis. Within the pathway, rstn8 catalyzes the C3 esterification of restrictinol with glycine to yield restricticin. Rstn8 represents an example of the emerging class of single-module NRPS-like enzymes that perform esterification reactions. Rstn8 displays strict substrate specificity toward glycine as no other natural amino acid is accepted. Rstn8 does not recognize desmethylrestrictinol as a substrate, demonstrating that rstn1-catalyzed methylation, possibly protecting the C4-OH, must precede the final esterification step. The highly reducing polyketide synthase rstn3, the short chain dehydrogenase rstn4, the cyclase rstn5, the FAD-dependent monooxygenase rstn6 and the enoylreductase rstn7 are required to generate the first stable intermediate desmethylrestrictinol. Rstn3 with rstn7 biosynthesize the first polyketide chain intermediate that is reduced by rstn4, followed by epoxidation by rstn6 before 6-endo cyclization via epoxide opening by rstn5 leads to desmethylrestrictinol. The methyltransferase rstn1 then catalyzes the C4 O-methylation of desmethylrestrictinol to produce restrictinol, and the nonribosomal peptide synthetase rstn8 catalyzes the C3 esterification of restrictinol with glycine that leads to restricticin. The sequence is that of Nonribosomal peptide synthetase rstn8 from Aspergillus nomiae NRRL (strain ATCC 15546 / NRRL 13137 / CBS 260.88 / M93).